The chain runs to 136 residues: Small ribosomal subunit protein uS9 (136 aa).

A disordered region spans residues 97–136 (SPDNRKPLKTEGHLSRDPRAKERRKYGLKKARKAPQFSKR). Basic and acidic residues predominate over residues 98–116 (PDNRKPLKTEGHLSRDPRA). Basic residues predominate over residues 117 to 136 (KERRKYGLKKARKAPQFSKR).

Belongs to the universal ribosomal protein uS9 family.

In Prochlorococcus marinus (strain MIT 9215), this protein is Small ribosomal subunit protein uS9.